We begin with the raw amino-acid sequence, 135 residues long: Glutaredoxin-C3 (135 aa).

The region spanning 26-134 is the Glutaredoxin domain; it reads VARVERLASE…PLLKEAGALW (109 aa). A disulfide bond links Cys-46 and Cys-49. Positions 132–135 match the Responsive for interaction with TGA factors motif; that stretch reads ALWL.

The protein belongs to the glutaredoxin family. CC-type subfamily.

It is found in the cytoplasm. The protein resides in the nucleus. Functionally, has a glutathione-disulfide oxidoreductase activity in the presence of NADPH and glutathione reductase. Reduces low molecular weight disulfides and proteins. The chain is Glutaredoxin-C3 (GRXC3) from Oryza sativa subsp. japonica (Rice).